The sequence spans 182 residues: Crossover junction endodeoxyribonuclease RuvC (182 aa).

Catalysis depends on residues Asp-7, Glu-67, and Asp-139. Mg(2+) contacts are provided by Asp-7, Glu-67, and Asp-139.

This sequence belongs to the RuvC family. In terms of assembly, homodimer which binds Holliday junction (HJ) DNA. The HJ becomes 2-fold symmetrical on binding to RuvC with unstacked arms; it has a different conformation from HJ DNA in complex with RuvA. In the full resolvosome a probable DNA-RuvA(4)-RuvB(12)-RuvC(2) complex forms which resolves the HJ. It depends on Mg(2+) as a cofactor.

The protein localises to the cytoplasm. It catalyses the reaction Endonucleolytic cleavage at a junction such as a reciprocal single-stranded crossover between two homologous DNA duplexes (Holliday junction).. Functionally, the RuvA-RuvB-RuvC complex processes Holliday junction (HJ) DNA during genetic recombination and DNA repair. Endonuclease that resolves HJ intermediates. Cleaves cruciform DNA by making single-stranded nicks across the HJ at symmetrical positions within the homologous arms, yielding a 5'-phosphate and a 3'-hydroxyl group; requires a central core of homology in the junction. The consensus cleavage sequence is 5'-(A/T)TT(C/G)-3'. Cleavage occurs on the 3'-side of the TT dinucleotide at the point of strand exchange. HJ branch migration catalyzed by RuvA-RuvB allows RuvC to scan DNA until it finds its consensus sequence, where it cleaves and resolves the cruciform DNA. This is Crossover junction endodeoxyribonuclease RuvC from Bordetella pertussis (strain Tohama I / ATCC BAA-589 / NCTC 13251).